A 384-amino-acid polypeptide reads, in one-letter code: PqqA peptide cyclase (384 aa).

The 216-residue stretch at 5 to 220 (VGLPLWLLAE…TNEYREKLKA (216 aa)) folds into the Radical SAM core domain. [4Fe-4S] cluster contacts are provided by cysteine 19, cysteine 23, and cysteine 26.

The protein belongs to the radical SAM superfamily. PqqE family. Interacts with PqqD. The interaction is necessary for activity of PqqE. [4Fe-4S] cluster serves as cofactor.

The enzyme catalyses [PQQ precursor protein] + S-adenosyl-L-methionine = E-Y cross-linked-[PQQ precursor protein] + 5'-deoxyadenosine + L-methionine + H(+). Its pathway is cofactor biosynthesis; pyrroloquinoline quinone biosynthesis. Catalyzes the cross-linking of a glutamate residue and a tyrosine residue in the PqqA protein as part of the biosynthesis of pyrroloquinoline quinone (PQQ). This is PqqA peptide cyclase from Acinetobacter baumannii (strain AB0057).